Here is a 353-residue protein sequence, read N- to C-terminus: Inositol 3-kinase (353 aa).

ATP is bound by residues serine 197, glycine 247 to aspartate 250, and asparagine 274. Aspartate 250 acts as the Proton acceptor in catalysis.

The protein belongs to the carbohydrate kinase pfkB family.

It carries out the reaction myo-inositol + ATP = 1D-myo-inositol 3-phosphate + ADP + H(+). In terms of biological role, kinase that phosphorylates myo-inositol to produce multiple myo-inositol monophosphates. Participates in phytic acid biosynthesis in developing seeds. Phytic acid is the primary storage form of phosphorus in cereal grains and other plant seeds. This chain is Inositol 3-kinase, found in Arabidopsis thaliana (Mouse-ear cress).